The primary structure comprises 417 residues: F-box protein At3g07870 (417 aa).

The 47-residue stretch at 22-68 (GGGLESLPEDIIADIFSRLPISSIARLMFVCRSWRSVLTQHGRLSSS) folds into the F-box domain.

The protein is F-box protein At3g07870 of Arabidopsis thaliana (Mouse-ear cress).